A 138-amino-acid polypeptide reads, in one-letter code: Ribosome-binding factor A (138 aa).

Belongs to the RbfA family. Monomer. Binds 30S ribosomal subunits, but not 50S ribosomal subunits or 70S ribosomes.

It is found in the cytoplasm. One of several proteins that assist in the late maturation steps of the functional core of the 30S ribosomal subunit. Associates with free 30S ribosomal subunits (but not with 30S subunits that are part of 70S ribosomes or polysomes). Required for efficient processing of 16S rRNA. May interact with the 5'-terminal helix region of 16S rRNA. The polypeptide is Ribosome-binding factor A (Chromobacterium violaceum (strain ATCC 12472 / DSM 30191 / JCM 1249 / CCUG 213 / NBRC 12614 / NCIMB 9131 / NCTC 9757 / MK)).